A 95-amino-acid polypeptide reads, in one-letter code: Protein K6 (95 aa).

An N-terminal signal peptide occupies residues M1–S24.

In Human herpesvirus 8 type P (isolate GK18) (HHV-8), this protein is Protein K6 (K6).